The primary structure comprises 173 residues: Alkyl hydroperoxide reductase AhpD (173 aa).

C131 acts as the Proton donor in catalysis. The cysteines at positions 131 and 134 are disulfide-linked. The active-site Cysteine sulfenic acid (-SOH) intermediate is the C134.

The protein belongs to the AhpD family.

The enzyme catalyses N(6)-[(R)-dihydrolipoyl]-L-lysyl-[lipoyl-carrier protein] + a hydroperoxide = N(6)-[(R)-lipoyl]-L-lysyl-[lipoyl-carrier protein] + an alcohol + H2O. Its function is as follows. Antioxidant protein with alkyl hydroperoxidase activity. Required for the reduction of the AhpC active site cysteine residues and for the regeneration of the AhpC enzyme activity. The sequence is that of Alkyl hydroperoxide reductase AhpD from Rhizorhabdus wittichii (strain DSM 6014 / CCUG 31198 / JCM 15750 / NBRC 105917 / EY 4224 / RW1) (Sphingomonas wittichii).